Here is a 130-residue protein sequence, read N- to C-terminus: Small ribosomal subunit protein uS9 (130 aa).

It belongs to the universal ribosomal protein uS9 family.

The chain is Small ribosomal subunit protein uS9 from Pseudomonas syringae pv. tomato (strain ATCC BAA-871 / DC3000).